We begin with the raw amino-acid sequence, 321 residues long: Chlorohydroquinone/hydroquinone 1,2-dioxygenase (321 aa).

VOC domains are found at residues 10-138 (GLHH…IIEQ) and 160-282 (GFHS…ASVT). Fe cation contacts are provided by His-162, His-229, and Glu-278.

It belongs to the extradiol ring-cleavage dioxygenase family. It depends on Fe(2+) as a cofactor.

The enzyme catalyses hydroquinone + O2 = (2E,4Z)-4-hydroxy-6-oxohexa-2,4-dienoate + H(+). It catalyses the reaction chlorohydroquinone + O2 = 5-chlorocarbonyl-4-hydroxy-penta-2,4-dienoate + H(+). Its pathway is xenobiotic degradation; gamma-hexachlorocyclohexane degradation. Cleaves aromatic rings with two hydroxyl groups at para positions with consumption of O(2). Catalyzes the cleavage of chlorohydroquinone (CHQ), as part of the gamma-hexachlorocyclohexane (gamma-HCH or lindane) degradation pathway, producing 5-chlorocarbonyl-4-hydroxy-penta-2,4-dienoate as an intermediate product that can react with water yielding maleylacetate. This degradation pathway allows S.japonicum UT26 to grow on gamma-HCH as the sole source of carbon and energy. Can also use hydroquinone (HQ) as substrate, leading to gamma-hydroxymuconic semialdehyde. Is not able to convert catechol, contrary to meta-cleavage dioxygenases. This chain is Chlorohydroquinone/hydroquinone 1,2-dioxygenase, found in Sphingobium indicum (strain DSM 16413 / CCM 7287 / MTCC 6362 / UT26 / NBRC 101211 / UT26S) (Sphingobium japonicum).